The sequence spans 298 residues: Ethanolamine ammonia-lyase small subunit (298 aa).

3 residues coordinate adenosylcob(III)alamin: V210, E231, and C261.

This sequence belongs to the EutC family. The basic unit is a heterodimer which dimerizes to form tetramers. The heterotetramers trimerize; 6 large subunits form a core ring with 6 small subunits projecting outwards. It depends on adenosylcob(III)alamin as a cofactor.

The protein resides in the bacterial microcompartment. It carries out the reaction ethanolamine = acetaldehyde + NH4(+). Its pathway is amine and polyamine degradation; ethanolamine degradation. Catalyzes the deamination of various vicinal amino-alcohols to oxo compounds. Allows this organism to utilize ethanolamine as the sole source of nitrogen and carbon in the presence of external vitamin B12. In Salmonella typhi, this protein is Ethanolamine ammonia-lyase small subunit.